The following is a 422-amino-acid chain: Tyrosine--tRNA ligase (422 aa).

Tyr-37 contacts L-tyrosine. Positions 42 to 51 (PTEESLHIGH) match the 'HIGH' region motif. Tyr-175 and Gln-179 together coordinate L-tyrosine. The 'KMSKS' region signature appears at 235 to 239 (KFGKT). Lys-238 contacts ATP. An S4 RNA-binding domain is found at 357 to 414 (KDLQEALVLTSLAQSRTQAKNMIISNSISINTEKIRKNHIFHEKDKLFGKFTLLSRGK).

Belongs to the class-I aminoacyl-tRNA synthetase family. TyrS type 1 subfamily. In terms of assembly, homodimer.

The protein localises to the cytoplasm. The enzyme catalyses tRNA(Tyr) + L-tyrosine + ATP = L-tyrosyl-tRNA(Tyr) + AMP + diphosphate + H(+). Its function is as follows. Catalyzes the attachment of tyrosine to tRNA(Tyr) in a two-step reaction: tyrosine is first activated by ATP to form Tyr-AMP and then transferred to the acceptor end of tRNA(Tyr). This is Tyrosine--tRNA ligase from Buchnera aphidicola subsp. Acyrthosiphon pisum (strain 5A).